Reading from the N-terminus, the 268-residue chain is MYKDIKVDPAQLEAALDARLKIRAGFDKPTAGMAAGMTQVNMISVPRDWAYDFLLYAHRNPQSCPVLDVLEEGIYATKLAADSDIRTDFPRYRIWKDGEMVDEVTDAREIYNAHPDLVTFLIGCSFSFETALQEAGIEVRHIHDDTNVPMYLSNIKCEPAGRISGNMVVSMRPIPSHQISEAVKITARMPSVHGAPVHIGHPESLGIKDVNKPDFGDASRIEAGEIPVFWACGVTPQAAVMNSKIPFAISHAPGYMFITDIPDRAWMG.

The protein belongs to the D-glutamate cyclase family.

This Acinetobacter baumannii (strain AYE) protein is Putative hydro-lyase ABAYE2440.